The sequence spans 396 residues: Pre-mycofactocin synthase (396 aa).

An FMN hydroxy acid dehydrogenase domain is found at 1–383 (MAEAWFETVA…SPADILVPTG (383 aa)). Residues Ser108, Gln128, Thr156, and Lys254 each coordinate FMN. His278 (proton acceptor) is an active-site residue. Residues 309–313 (DGGIR) and 332–333 (GR) each bind FMN.

This sequence belongs to the FMN-dependent alpha-hydroxy acid dehydrogenase family. It depends on FMN as a cofactor.

It catalyses the reaction 3-amino-5-[(4-hydroxyphenyl)methyl]-4,4-dimethyl-2-pyrrolidin-2-one + O2 + H2O = pre-mycofactocin + H2O2 + NH4(+). Functionally, involved in the biosynthesis of the enzyme cofactor mycofactocin (MFT). Catalyzes the oxidative deamination of AHDP (3-amino-5-[(4-hydroxyphenyl)methyl]-4,4-dimethyl-2-pyrrolidin-2-one), forming an alpha-keto amide moiety on the resulting molecule, which is called pre-mycofactocin (PMFT). This reaction occurs via a 5-[(4-hydroxyphenyl)methyl]-3-imino-4,4-dimethylpyrrolidin-2-one intermediate, which converts to PMFT. The alpha-keto amide moiety is the redox-active center for the redox activity of mycofactocin. The protein is Pre-mycofactocin synthase (mftD) of Mycobacterium tuberculosis (strain CDC 1551 / Oshkosh).